The following is a 456-amino-acid chain: NADH-quinone oxidoreductase subunit N (456 aa).

The next 14 membrane-spanning stretches (helical) occupy residues 6 to 26, 45 to 65, 75 to 95, 97 to 117, 118 to 138, 151 to 171, 181 to 201, 220 to 240, 252 to 272, 281 to 301, 308 to 328, 355 to 375, 382 to 402, and 426 to 446; these read LFALSPLAALAIGAVIAMLLA, VAALLEILRAGVPPAPIGALF, TAYAALFGLAALVFLRVAGVA, EAPALVALVALGAASLTGAGH, AATLFLGLELISLSLIALFAF, FLVMSGLATSAQLLGVALIYA, WVGHGPLFALGTALLLAGLAF, PAGAAALAGVVSKAAVAIAIL, LWSAGLATLGAASVLVGNVLA, MLGYSTIAHSGYIAMILASGA, VLFYLGIYAPALTATLCASAM, GLLSLAGLPVAGGFVAKLYLF, ESWILLAIAMVGAALGFYYYI, and LLLIFCFGLIMLFGFEPLVLI.

Belongs to the complex I subunit 2 family. NDH-1 is composed of 14 different subunits. Subunits NuoA, H, J, K, L, M, N constitute the membrane sector of the complex.

The protein resides in the cell inner membrane. The catalysed reaction is a quinone + NADH + 5 H(+)(in) = a quinol + NAD(+) + 4 H(+)(out). In terms of biological role, NDH-1 shuttles electrons from NADH, via FMN and iron-sulfur (Fe-S) centers, to quinones in the respiratory chain. The immediate electron acceptor for the enzyme in this species is believed to be ubiquinone. Couples the redox reaction to proton translocation (for every two electrons transferred, four hydrogen ions are translocated across the cytoplasmic membrane), and thus conserves the redox energy in a proton gradient. The chain is NADH-quinone oxidoreductase subunit N from Rhodopseudomonas palustris (strain BisA53).